Reading from the N-terminus, the 912-residue chain is Non-lysosomal glucosylceramidase (912 aa).

The tract at residues 886–912 (HKKNSSRPAVTQGTAPSQPECGPKRSL) is disordered. Polar residues predominate over residues 891-902 (SRPAVTQGTAPS).

It belongs to the non-lysosomal glucosylceramidase family.

The protein resides in the endoplasmic reticulum membrane. It localises to the golgi apparatus membrane. It catalyses the reaction a beta-D-glucosyl-(1&lt;-&gt;1')-N-acylsphing-4-enine + H2O = an N-acylsphing-4-enine + D-glucose. It carries out the reaction a beta-D-galactosyl-(1&lt;-&gt;1')-N-acylsphing-4-enine + H2O = an N-acylsphing-4-enine + D-galactose. The enzyme catalyses beta-D-glucosyl-(1-&gt;3)-O-lithocholate + H2O = lithocholate + D-glucose. The catalysed reaction is beta-D-glucosyl-(1-&gt;3)-O-chenodeoxycholate + H2O = chenodeoxycholate + D-glucose. It catalyses the reaction a di-trans,poly-cis-dolichyl beta-D-glucosyl phosphate + chenodeoxycholate = beta-D-glucosyl-(1-&gt;3)-O-chenodeoxycholate + a di-trans,poly-cis-dolichyl phosphate + H(+). It carries out the reaction octyl beta-D-glucose + chenodeoxycholate = beta-D-glucosyl-(1-&gt;3)-O-chenodeoxycholate + octan-1-ol. The enzyme catalyses cholesteryl 3-beta-D-glucoside + H2O = cholesterol + D-glucose. The catalysed reaction is a beta-D-glucosyl-(1&lt;-&gt;1')-N-acylsphing-4-enine + cholesterol = cholesteryl 3-beta-D-glucoside + an N-acylsphing-4-enine. It catalyses the reaction beta-D-glucosyl-N-(9Z-octadecenoyl)-sphing-4E-enine + cholesterol = N-(9Z-octadecenoyl)-sphing-4-enine + cholesteryl 3-beta-D-glucoside. It carries out the reaction a beta-D-galactosyl-(1&lt;-&gt;1')-N-acylsphing-4-enine + cholesterol = cholesteryl 3-beta-D-galactoside + an N-acylsphing-4-enine. The enzyme catalyses 1-(beta-D-galactosyl)-N-dodecanoylsphing-4-enine + cholesterol = cholesteryl 3-beta-D-galactoside + N-dodecanoylsphing-4-enine. It functions in the pathway lipid metabolism; sphingolipid metabolism. The protein operates within steroid metabolism; cholesterol metabolism. With respect to regulation, enzymatic activity is dependent on membrane association and requires the presence of lipids. Functionally, non-lysosomal glucosylceramidase that catalyzes the hydrolysis of glucosylceramides/GlcCers (such as beta-D-glucosyl-(1&lt;-&gt;1')-N-acylsphing-4-enine) to free glucose and ceramides (such as N-acylsphing-4-enine). GlcCers are membrane glycosphingolipids that have a wide intracellular distribution. They are the main precursors of more complex glycosphingolipids that play a role in cellular growth, differentiation, adhesion, signaling, cytoskeletal dynamics and membrane properties. Involved in the transglucosylation of cholesterol, transfers glucose from GlcCer to cholesterol, thereby modifying its water solubility and biological properties. Under specific conditions, may catalyze the reverse reaction, transferring glucose from cholesteryl-3-beta-D-glucoside to ceramide (such as N-acylsphing-4-enine). May play a role in the metabolism of bile acids. Able to hydrolyze bile acid 3-O-glucosides as well as to produce bile acid-glucose conjugates thanks to a bile acid glucosyl transferase activity. Catalyzes the hydrolysis of galactosylceramides/GalCers (such as beta-D-galactosyl-(1&lt;-&gt;1')-N-acylsphing-4-enine), as well as the galactosyl transfer between GalCers and cholesterol in vitro with lower activity compared with their activity against GlcCers. This chain is Non-lysosomal glucosylceramidase, found in Rattus norvegicus (Rat).